The primary structure comprises 329 residues: RNA-binding protein CP33, chloroplastic (329 aa).

The transit peptide at 1 to 69 (MSSAYCSSAV…NIRRHRFFCA (69 aa)) directs the protein to the chloroplast. Residues 77–104 (ADDEIQASVEEEEEVEEEGDEGEEEVEE) are compositionally biased toward acidic residues. Disordered stretches follow at residues 77-117 (ADDE…EEGR) and 296-329 (SEREKPTVSPPSVEEGETEEASLESNEVLSNVSA). RRM domains follow at residues 116–194 (GRLY…FPEV) and 219–297 (HKVY…LASE).

The protein localises to the plastid. It localises to the chloroplast. Its function is as follows. Could be involved in splicing and/or processing of chloroplast RNAs. The polypeptide is RNA-binding protein CP33, chloroplastic (Arabidopsis thaliana (Mouse-ear cress)).